We begin with the raw amino-acid sequence, 463 residues long: UDP-N-acetylmuramoylalanine--D-glutamate ligase (463 aa).

Residue 116 to 122 (GTNGKTT) coordinates ATP.

It belongs to the MurCDEF family.

The protein localises to the cytoplasm. It carries out the reaction UDP-N-acetyl-alpha-D-muramoyl-L-alanine + D-glutamate + ATP = UDP-N-acetyl-alpha-D-muramoyl-L-alanyl-D-glutamate + ADP + phosphate + H(+). It participates in cell wall biogenesis; peptidoglycan biosynthesis. Its function is as follows. Cell wall formation. Catalyzes the addition of glutamate to the nucleotide precursor UDP-N-acetylmuramoyl-L-alanine (UMA). This Synechococcus elongatus (strain ATCC 33912 / PCC 7942 / FACHB-805) (Anacystis nidulans R2) protein is UDP-N-acetylmuramoylalanine--D-glutamate ligase.